The sequence spans 98 residues: NADH-ubiquinone oxidoreductase chain 4L (98 aa).

Helical transmembrane passes span 1-21 (MSLT…GLLM), 29-49 (SLLC…MVIL), and 61-81 (IILL…LVMV).

It belongs to the complex I subunit 4L family. As to quaternary structure, core subunit of respiratory chain NADH dehydrogenase (Complex I) which is composed of 45 different subunits.

It is found in the mitochondrion inner membrane. The enzyme catalyses a ubiquinone + NADH + 5 H(+)(in) = a ubiquinol + NAD(+) + 4 H(+)(out). Core subunit of the mitochondrial membrane respiratory chain NADH dehydrogenase (Complex I) which catalyzes electron transfer from NADH through the respiratory chain, using ubiquinone as an electron acceptor. Part of the enzyme membrane arm which is embedded in the lipid bilayer and involved in proton translocation. In Vampyressa thyone (Northern little yellow-eared bat), this protein is NADH-ubiquinone oxidoreductase chain 4L (MT-ND4L).